The following is a 1007-amino-acid chain: Inversin-A (1007 aa).

16 ANK repeats span residues Ser9–Gln39, Leu43–His72, Ser76–His105, Arg109–Ala140, Arg144–Ile173, Glu177–Leu209, Glu216–Pro246, Leu250–Ile279, Gln284–Glu313, Glu317–Val346, Tyr352–Ala381, Met385–Leu414, Asp418–Ala447, Glu451–Ile480, Asn484–Gln513, and Glu519–Ala549. Positions Arg486 to Asn494 match the D-box 1 motif. Residues Gln551–Lys580 form the IQ 1 domain. 2 stretches are compositionally biased toward basic and acidic residues: residues Arg585 to Gln599 and Gly608 to Glu652. 2 disordered regions span residues Arg585 to Ser837 and Ser868 to Lys893. Polar residues predominate over residues Ile684–Met701. A compositionally biased stretch (low complexity) spans Ser702–Ser712. The span at Asn727–Ser745 shows a compositional bias: polar residues. Over residues His751–Lys771 the composition is skewed to basic and acidic residues. The span at Gly772–Leu784 shows a compositional bias: basic residues. Positions Lys870 to Lys893 are enriched in polar residues. The D-box 2 motif lies at Arg964–Lys972. Residues Lys971–Arg1000 enclose the IQ 2 domain.

In terms of assembly, interacts with apc2. Binds calmodulin.

The protein localises to the cytoplasm. It localises to the cytoskeleton. In terms of biological role, required for normal renal development and establishment of left-right axis. Probably acts as a molecular switch between different Wnt signaling pathways. Inhibits the canonical Wnt pathway by targeting cytoplasmic disheveled for degradation by the ubiquitin-proteasome. This suggests that it is required in renal development to oppose the repression of terminal differentiation of tubular epithelial cells by Wnt signaling. Plays a central role in convergent extension movements in gastrulating embryos, a processus regulated by Wnt signaling. The polypeptide is Inversin-A (invs-a) (Xenopus laevis (African clawed frog)).